The primary structure comprises 209 residues: Protein lin-28 homolog A (209 aa).

The disordered stretch occupies residues 1–31 (MGSVSNQQFAGGCAKAAEKAPEEAPPDAARA). G2 carries the post-translational modification N-acetylglycine. At S3 the chain carries Phosphoserine. The 74-residue stretch at 39–112 (HGAGICKWFN…GLESIRVTGP (74 aa)) folds into the CSD domain. Positions 113 to 136 (GGVFCIGSERRPKGKNMQKRRSKG) are flexible linker. S120 is subject to Phosphoserine. 2 consecutive CCHC-type zinc fingers follow at residues 137–154 (DRCY…ECKL) and 159–176 (KKCH…SCPL). Residues 177 to 209 (KAQQGPSSQGKPAYFREEEEEIHSPALLPEAQN) are disordered. S200 carries the post-translational modification Phosphoserine.

The protein belongs to the lin-28 family. Monomer. During skeletal muscle differentiation, associated with translation initiation complexes in the polysomal compartment. Directly interacts with EIF3S2. Interacts with NCL in an RNA-dependent manner. Interacts with TUT4 in the presence of pre-let-7 RNA. Expressed in embryonic stem cells (ES cells), spermatagonia and testis. Expressed in numerous epithelial tissues including the epithelia of the small intestine, the intralobular duct epithelium of the mammary gland and the epithelia of Henle's loop in the kidney and in the collecting duct (at protein level). Also expressed in the myocardium and skeletal muscle (at protein level).

The protein resides in the cytoplasm. It is found in the rough endoplasmic reticulum. The protein localises to the P-body. It localises to the stress granule. Its subcellular location is the nucleus. The protein resides in the nucleolus. In terms of biological role, RNA-binding protein that inhibits processing of pre-let-7 miRNAs and regulates translation of mRNAs that control developmental timing, pluripotency and metabolism. Seems to recognize a common structural G-quartet (G4) feature in its miRNA and mRNA targets. 'Translational enhancer' that drives specific mRNAs to polysomes and increases the efficiency of protein synthesis. Its association with the translational machinery and target mRNAs results in an increased number of initiation events per molecule of mRNA and, indirectly, in mRNA stabilization. Binds IGF2 mRNA, MYOD1 mRNA, ARBP/36B4 ribosomal protein mRNA and its own mRNA. Essential for skeletal muscle differentiation program through the translational up-regulation of IGF2 expression. Suppressor of microRNA (miRNA) biogenesis, including that of let-7, miR107, miR-143 and miR-200c. Specifically binds the miRNA precursors (pre-miRNAs), recognizing an 5'-GGAG-3' motif found in pre-miRNA terminal loop, and recruits TUT4 and TUT7 uridylyltransferaseS. This results in the terminal uridylation of target pre-miRNAs. Uridylated pre-miRNAs fail to be processed by Dicer and undergo degradation. The repression of let-7 expression is required for normal development and contributes to maintain the pluripotent state by preventing let-7-mediated differentiation of embryonic stem cells. Localized to the periendoplasmic reticulum area, binds to a large number of spliced mRNAs and inhibits the translation of mRNAs destined for the ER, reducing the synthesis of transmembrane proteins, ER or Golgi lumen proteins, and secretory proteins. Binds to and enhances the translation of mRNAs for several metabolic enzymes, such as PFKP, PDHA1 or SDHA, increasing glycolysis and oxidative phosphorylation. Which, with the let-7 repression may enhance tissue repair in adult tissue. The chain is Protein lin-28 homolog A (Lin28a) from Mus musculus (Mouse).